The primary structure comprises 247 residues: 14-3-3 protein gamma (247 aa).

The residue at position 1 (Met-1) is an N-acetylmethionine; in 14-3-3 protein gamma; alternate; partial. Val-2 carries the N-acetylvaline; in 14-3-3 protein gamma, N-terminally processed; partial modification. Position 2 is an N-acetylvaline; partial (Val-2). Residues 2–166 form a required for interaction with SPATA18/MIEAP (isoform 2) but dispensable for binding to SPATA18/MIEAP (isoform 1) region; sequence VDREQLVQKA…AHEISKEHMQ (165 aa). The tract at residues 2 to 247 is interaction with SPATA18/MIEAP; the sequence is VDREQLVQKA…QDDDGGEGNN (246 aa). The residue at position 71 (Ser-71) is a Phosphoserine. A Phosphotyrosine modification is found at Tyr-133. At Thr-145 the chain carries Phosphothreonine. Ser-215 carries the phosphoserine modification. The residue at position 234 (Thr-234) is a Phosphothreonine. Residue Ser-235 is modified to Phosphoserine.

This sequence belongs to the 14-3-3 family. Homodimer. Part of a complex that contains DSG3, PKP1, YAP1 and YWHAG; the complex is required for localization of DSG3 and YAP1 to the cell membrane in keratinocytes. Interacts with SAMSN1. Interacts with RAF1, SSH1 and CRTC2/TORC2. Interacts with ABL1 (phosphorylated form); the interaction retains it in the cytoplasm. Interacts with GAB2. Interacts with MDM4 (phosphorylated); negatively regulates MDM4 activity toward TP53. Interacts with PKA-phosphorylated AANAT and SIRT2. Interacts with the 'Thr-369' phosphorylated form of DAPK2. Interacts with PI4KB, TBC1D22A and TBC1D22B. Interacts with SLITRK1. Interacts with LRRK2; this interaction is dependent on LRRK2 phosphorylation. Interacts with MARK2 and MARK3. Interacts with MEFV. Interacts with ENDOG, TSC2 and PIK3C3; interaction with ENDOG weakens its interaction with TSC2 and PIK3C3. Interacts with (phosphorylated) WDR24. Interacts with BEST1; this interaction promotes L-glutamate channel activity leading to the positive regulation of NMDA glutamate receptor activity through the L-glutamate secretion. Interacts with PKP1 (when phosphorylated); the interaction results in translocation of PKP1 to the cytoplasm and loss of intercellular adhesion in keratinocytes. Interacts with SPATA18/MIEAP (isoforms 1 and 2); a protein that also plays a role in MALM. Phosphorylated by various PKC isozymes. As to expression, highly expressed in brain, skeletal muscle, and heart.

The protein resides in the cytoplasm. The protein localises to the cytosol. It is found in the mitochondrion matrix. In terms of biological role, adapter protein implicated in the regulation of a large spectrum of both general and specialized signaling pathways. Binds to a large number of partners, usually by recognition of a phosphoserine or phosphothreonine motif. Binding generally results in the modulation of the activity of the binding partner. Promotes inactivation of WDR24 component of the GATOR2 complex by binding to phosphorylated WDR24. Participates in the positive regulation of NMDA glutamate receptor activity by promoting the L-glutamate secretion through interaction with BEST1. Reduces keratinocyte intercellular adhesion, via interacting with PKP1 and sequestering it in the cytoplasm, thereby reducing its incorporation into desmosomes. Plays a role in mitochondrial protein catabolic process (also named MALM) that promotes the degradation of damaged proteins inside mitochondria. In Homo sapiens (Human), this protein is 14-3-3 protein gamma.